Consider the following 911-residue polypeptide: Protein translocase subunit SecA (911 aa).

ATP-binding positions include Gln-90, 108-112 (GEGKT), and Asp-515. Cys-891, Cys-893, Cys-902, and His-903 together coordinate Zn(2+).

Belongs to the SecA family. Monomer and homodimer. Part of the essential Sec protein translocation apparatus which comprises SecA, SecYEG and auxiliary proteins SecDF-YajC and YidC. The cofactor is Zn(2+).

The protein resides in the cell inner membrane. Its subcellular location is the cytoplasm. The enzyme catalyses ATP + H2O + cellular proteinSide 1 = ADP + phosphate + cellular proteinSide 2.. Part of the Sec protein translocase complex. Interacts with the SecYEG preprotein conducting channel. Has a central role in coupling the hydrolysis of ATP to the transfer of proteins into and across the cell membrane, serving both as a receptor for the preprotein-SecB complex and as an ATP-driven molecular motor driving the stepwise translocation of polypeptide chains across the membrane. The protein is Protein translocase subunit SecA of Blochmanniella pennsylvanica (strain BPEN).